The following is an 86-amino-acid chain: Curamycin polyketide synthase acyl carrier protein (86 aa).

One can recognise a Carrier domain in the interval 7–86; that stretch reads QVTVEELATL…VVNGALASGA (80 aa). Ser44 is modified (O-(pantetheine 4'-phosphoryl)serine).

4'-phosphopantetheine is transferred from CoA to a specific serine of the apo-ACP-like protein.

The protein operates within antibiotic biosynthesis; curamycin biosynthesis. Functionally, acyl carrier protein. This is Curamycin polyketide synthase acyl carrier protein (curE) from Streptomyces cyaneus (Streptomyces curacoi).